The sequence spans 548 residues: Chaperonin GroEL (548 aa).

ATP contacts are provided by residues 29–32 (TLGP), Lys50, 86–90 (DGTTT), Gly413, 479–481 (NAA), and Asp496.

The protein belongs to the chaperonin (HSP60) family. Forms a cylinder of 14 subunits composed of two heptameric rings stacked back-to-back. Interacts with the co-chaperonin GroES.

The protein resides in the cytoplasm. The enzyme catalyses ATP + H2O + a folded polypeptide = ADP + phosphate + an unfolded polypeptide.. In terms of biological role, together with its co-chaperonin GroES, plays an essential role in assisting protein folding. The GroEL-GroES system forms a nano-cage that allows encapsulation of the non-native substrate proteins and provides a physical environment optimized to promote and accelerate protein folding. This chain is Chaperonin GroEL, found in Deinococcus radiodurans (strain ATCC 13939 / DSM 20539 / JCM 16871 / CCUG 27074 / LMG 4051 / NBRC 15346 / NCIMB 9279 / VKM B-1422 / R1).